The chain runs to 407 residues: Tryptophan synthase beta chain (407 aa).

The residue at position 98 (Lys98) is an N6-(pyridoxal phosphate)lysine.

Belongs to the TrpB family. As to quaternary structure, tetramer of two alpha and two beta chains. It depends on pyridoxal 5'-phosphate as a cofactor.

The enzyme catalyses (1S,2R)-1-C-(indol-3-yl)glycerol 3-phosphate + L-serine = D-glyceraldehyde 3-phosphate + L-tryptophan + H2O. The protein operates within amino-acid biosynthesis; L-tryptophan biosynthesis; L-tryptophan from chorismate: step 5/5. In terms of biological role, the beta subunit is responsible for the synthesis of L-tryptophan from indole and L-serine. The sequence is that of Tryptophan synthase beta chain from Bradyrhizobium sp. (strain BTAi1 / ATCC BAA-1182).